Consider the following 120-residue polypeptide: HTH-type transcriptional regulator MerD (120 aa).

The HTH merR-type domain maps to 3-72 (AYTVSQLAHN…LDALARLCRA (70 aa)). The segment at residues 6 to 25 (VSQLAHNAGVSVHIVRDYLV) is a DNA-binding region (H-T-H motif).

The protein is HTH-type transcriptional regulator MerD (merD) of Shigella flexneri.